The primary structure comprises 222 residues: Glutathione S-transferase A4 (222 aa).

At Met-1 the chain carries N-acetylmethionine. The 81-residue stretch at 3–83 (AKPKLYYFNG…YLAAKYNLYG (81 aa)) folds into the GST N-terminal domain. Residues Tyr-9, 53-55 (GQV), and 66-68 (TQT) each bind glutathione. Residues 85-208 (DLKERVRIDM…QPGSQRKPPP (124 aa)) enclose the GST C-terminal domain.

Belongs to the GST superfamily. Alpha family. As to quaternary structure, homodimer. In terms of processing, the N-terminus is blocked.

It is found in the cytoplasm. The catalysed reaction is RX + glutathione = an S-substituted glutathione + a halide anion + H(+). Functionally, conjugation of reduced glutathione to a wide number of exogenous and endogenous hydrophobic electrophiles. The chain is Glutathione S-transferase A4 (Gsta4) from Mus musculus (Mouse).